Here is a 252-residue protein sequence, read N- to C-terminus: 3-deoxy-manno-octulosonate cytidylyltransferase (252 aa).

The protein belongs to the KdsB family.

The protein localises to the cytoplasm. The catalysed reaction is 3-deoxy-alpha-D-manno-oct-2-ulosonate + CTP = CMP-3-deoxy-beta-D-manno-octulosonate + diphosphate. It participates in nucleotide-sugar biosynthesis; CMP-3-deoxy-D-manno-octulosonate biosynthesis; CMP-3-deoxy-D-manno-octulosonate from 3-deoxy-D-manno-octulosonate and CTP: step 1/1. The protein operates within bacterial outer membrane biogenesis; lipopolysaccharide biosynthesis. Its function is as follows. Activates KDO (a required 8-carbon sugar) for incorporation into bacterial lipopolysaccharide in Gram-negative bacteria. This Solibacter usitatus (strain Ellin6076) protein is 3-deoxy-manno-octulosonate cytidylyltransferase.